The sequence spans 143 residues: MAIERTFSIIKPDAVAKNHIGAIYNRFETAGLKIIASKMVHLSQEQAEGFYAEHSERPFFGALVAFMTSGPIMVQTLEGENAVLAHREILGATNPAEAAEGTIRADFAESIDENAAHGSDSVASAEREIAYFFSTEELCPRTR.

Positions 11, 59, 87, 93, 104, and 114 each coordinate ATP. Residue histidine 117 is the Pros-phosphohistidine intermediate of the active site.

This sequence belongs to the NDK family. In terms of assembly, homotetramer. Mg(2+) serves as cofactor.

The protein localises to the cytoplasm. It catalyses the reaction a 2'-deoxyribonucleoside 5'-diphosphate + ATP = a 2'-deoxyribonucleoside 5'-triphosphate + ADP. The enzyme catalyses a ribonucleoside 5'-diphosphate + ATP = a ribonucleoside 5'-triphosphate + ADP. Its function is as follows. Major role in the synthesis of nucleoside triphosphates other than ATP. The ATP gamma phosphate is transferred to the NDP beta phosphate via a ping-pong mechanism, using a phosphorylated active-site intermediate. This is Nucleoside diphosphate kinase from Shewanella halifaxensis (strain HAW-EB4).